Consider the following 1479-residue polypeptide: Chromosome partition protein MukB (1479 aa).

Residue 34 to 41 coordinates ATP; that stretch reads GGNGAGKS. 5 coiled-coil regions span residues 337 to 418, 511 to 603, 780 to 810, 847 to 1116, and 1206 to 1265; these read LNLV…QYQQ, QAER…RAPV, RAAR…DVQK, ELDR…AKAG, and DDPV…LQAV. Residues 666–783 form a flexible hinge region; sequence PGGSEDPRLN…EVPLFGRAAR (118 aa).

It belongs to the SMC family. MukB subfamily. As to quaternary structure, homodimerization via its hinge domain. Binds to DNA via its C-terminal region. Interacts, and probably forms a ternary complex, with MukE and MukF via its C-terminal region. The complex formation is stimulated by calcium or magnesium. Interacts with tubulin-related protein FtsZ.

Its subcellular location is the cytoplasm. It localises to the nucleoid. Functionally, plays a central role in chromosome condensation, segregation and cell cycle progression. Functions as a homodimer, which is essential for chromosome partition. Involved in negative DNA supercoiling in vivo, and by this means organize and compact chromosomes. May achieve or facilitate chromosome segregation by condensation DNA from both sides of a centrally located replisome during cell division. The protein is Chromosome partition protein MukB of Pectobacterium carotovorum subsp. carotovorum (strain PC1).